Reading from the N-terminus, the 459-residue chain is Antizyme inhibitor 2 (459 aa).

Residues 117 to 140 form a necessary for polyamine uptake stimulation region; it reads QVAQIKYAAKHGVRLLSFDNEVEL.

The protein belongs to the Orn/Lys/Arg decarboxylase class-II family. ODC antizyme inhibitor subfamily. As to quaternary structure, monomer. Interacts with OAZ1, OAZ2 and OAZ3; this interaction disrupts the interaction between the antizyme and ODC1. Does not form a heterodimer with ODC1. In terms of processing, ubiquitinated, leading to its proteasomal degradation; a process that is reduced in presence of antizymes. May also be degraded through the lysosomal degradative pathway in a proteasomal-independent manner. Expressed in the medulla and chromaffin cells of the adrenal gland. Expressed in the Langerhans islets of the pancreas. Expressed in the inner part of the seminiferous tubules and in spermatozoa located in the lumen of the epididymis of the testis. Expressed in the cortex, hippocampus and cerebellum of the brain. Expressed in normal and neoplastic mast cells (MC) (at protein level). Expressed in testis, pancreas and brain. Expressed throughout the differentiation process from spermatids to spermatozoa in the inner part of the seminiferous tubules. Expressed in the kidney: expressed in the superficial (Cs) and the deep layer (Cd) of the cortex region and in the outer stripe (OS), inner stripe (IS) and the inner medulla papilla (IM) of the medulla region.

The protein resides in the nucleus. Its subcellular location is the cytoplasm. The protein localises to the perinuclear region. It is found in the membrane. It localises to the cytoplasmic vesicle. The protein resides in the endoplasmic reticulum-Golgi intermediate compartment. Its subcellular location is the golgi apparatus. The protein localises to the cis-Golgi network. It is found in the trans-Golgi network. It localises to the cytoplasmic granule. The protein resides in the cell projection. Its subcellular location is the axon. The protein localises to the dendrite. It is found in the perikaryon. Its function is as follows. Antizyme inhibitor (AZI) protein that positively regulates ornithine decarboxylase (ODC) activity and polyamine uptake. AZI is an enzymatically inactive ODC homolog that counteracts the negative effect of ODC antizymes (AZs) OAZ1, OAZ2 and OAZ3 on ODC activity by competing with ODC for antizyme-binding. Inhibits antizyme-dependent ODC degradation and releases ODC monomers from their inactive complex with antizymes, leading to formation of the catalytically active ODC homodimer and restoring polyamine production. Participates in the morphological integrity of the trans-Golgi network (TGN) and functions as a regulator of intracellular secretory vesicle trafficking. This Mus musculus (Mouse) protein is Antizyme inhibitor 2 (Azin2).